The chain runs to 432 residues: MGNNVVVLGAQWGDEGKGKIVDLLTERAKYVVRYQGGHNAGHTLVINGEKTVLHLIPSGILRENVTSIIGNGVVLSPAALMKEMKELEDRGIPVRERLLLSEACPLILDYHVALDNAREKARGAKAIGTTGRGIGPAYEDKVARRGLRVGDLFDKETFAEKLKEVMEYHNFQLVNYYKAEAVDYQKVLDDTMAVADILTSMVVDVSDLLDQARQRGDFVMFEGAQGTLLDIDHGTYPYVTSSNTTAGGVATGSGLGPRYVDYVLGILKAYSTRVGAGPFPTELFDETGEFLCKQGNEYGATTGRRRRTGWLDTVAVRRAVQLNSLSGFCLTKLDVLDGLKEVKLCVAYRMPDGREVTTTPLAADDWKGVEPIYETMPGWSESTFGVKDRSGLPQAALNYIKRIEELTGVPIDIISTGPDRTETMILRDPFDA.

Residues 13–19 and 41–43 each bind GTP; these read GDEGKGK and GHT. Aspartate 14 acts as the Proton acceptor in catalysis. The Mg(2+) site is built by aspartate 14 and glycine 41. Residues 14-17, 39-42, threonine 130, arginine 144, glutamine 225, threonine 240, and arginine 304 contribute to the IMP site; these read DEGK and NAGH. Residue histidine 42 is the Proton donor of the active site. 300–306 contributes to the substrate binding site; that stretch reads ATTGRRR. GTP contacts are provided by residues arginine 306, 332 to 334, and 415 to 417; these read KLD and STG.

It belongs to the adenylosuccinate synthetase family. In terms of assembly, homodimer. Requires Mg(2+) as cofactor.

The protein resides in the cytoplasm. It carries out the reaction IMP + L-aspartate + GTP = N(6)-(1,2-dicarboxyethyl)-AMP + GDP + phosphate + 2 H(+). It functions in the pathway purine metabolism; AMP biosynthesis via de novo pathway; AMP from IMP: step 1/2. Its function is as follows. Plays an important role in the de novo pathway of purine nucleotide biosynthesis. Catalyzes the first committed step in the biosynthesis of AMP from IMP. This chain is Adenylosuccinate synthetase, found in Salmonella paratyphi C (strain RKS4594).